Reading from the N-terminus, the 492-residue chain is Trigger factor (492 aa).

The 86-residue stretch at 164–249 (GDLVVVDFVG…VSDVRVPRKA (86 aa)) folds into the PPIase FKBP-type domain. The interval 440 to 492 (EAEEDSIGKHDHDHDHKEKASDKPKAKKAAAPKKKAAPKKKAAPKAEKKSSDE) is disordered. A compositionally biased stretch (basic and acidic residues) spans 445–463 (SIGKHDHDHDHKEKASDKP). Basic residues predominate over residues 464–482 (KAKKAAAPKKKAAPKKKAA). Over residues 483–492 (PKAEKKSSDE) the composition is skewed to basic and acidic residues.

The protein belongs to the FKBP-type PPIase family. Tig subfamily.

It is found in the cytoplasm. It carries out the reaction [protein]-peptidylproline (omega=180) = [protein]-peptidylproline (omega=0). In terms of biological role, involved in protein export. Acts as a chaperone by maintaining the newly synthesized protein in an open conformation. Functions as a peptidyl-prolyl cis-trans isomerase. The polypeptide is Trigger factor (Zymomonas mobilis subsp. mobilis (strain ATCC 31821 / ZM4 / CP4)).